Reading from the N-terminus, the 157-residue chain is Chromophore lyase CpcS/CpeS 1 (157 aa).

It belongs to the CpcS/CpeS biliprotein lyase family.

It is found in the plastid. Its subcellular location is the organellar chromatophore. Covalently attaches a chromophore to Cys residue(s) of phycobiliproteins. This is Chromophore lyase CpcS/CpeS 1 from Paulinella chromatophora.